A 456-amino-acid chain; its full sequence is tRNA modification GTPase MnmE (456 aa).

Residues arginine 24, glutamate 81, and lysine 120 each contribute to the (6S)-5-formyl-5,6,7,8-tetrahydrofolate site. The TrmE-type G domain maps to 216–379 (GMTVVIAGRP…LRDHLKGCMG (164 aa)). Asparagine 226 serves as a coordination point for K(+). Residues 226–231 (NAGKSS), 245–251 (TDIAGTT), 270–273 (DTAG), and 335–338 (NKAD) contribute to the GTP site. Serine 230 lines the Mg(2+) pocket. K(+) is bound by residues threonine 245, isoleucine 247, and threonine 250. Threonine 251 serves as a coordination point for Mg(2+). Lysine 456 provides a ligand contact to (6S)-5-formyl-5,6,7,8-tetrahydrofolate.

The protein belongs to the TRAFAC class TrmE-Era-EngA-EngB-Septin-like GTPase superfamily. TrmE GTPase family. In terms of assembly, homodimer. Heterotetramer of two MnmE and two MnmG subunits. The cofactor is K(+).

It is found in the cytoplasm. In terms of biological role, exhibits a very high intrinsic GTPase hydrolysis rate. Involved in the addition of a carboxymethylaminomethyl (cmnm) group at the wobble position (U34) of certain tRNAs, forming tRNA-cmnm(5)s(2)U34. This Pseudomonas putida (strain ATCC 47054 / DSM 6125 / CFBP 8728 / NCIMB 11950 / KT2440) protein is tRNA modification GTPase MnmE.